The chain runs to 390 residues: uncharacterized protein (390 aa).

A run of 11 helical transmembrane segments spans residues 7–27 (IYIL…ISGI), 35–55 (LGIT…VYAL), 77–97 (LGLF…GWFI), 101–121 (IIMA…AAKI), 128–148 (GSAI…GVPL), 161–181 (VFGA…FTLP), 203–223 (VAMG…AYTY), 238–258 (LLSG…KFGG), 281–301 (LILL…LILW), 335–355 (MQFA…NVSL), and 357–377 (SITW…LLIF).

It belongs to the major facilitator superfamily.

It localises to the cell membrane. This is an uncharacterized protein from Bacillus subtilis (strain 168).